The following is a 242-amino-acid chain: Small ribosomal subunit protein uS3 (242 aa).

Positions 39-110 (IRKFIHKKYG…QVRINVVEVE (72 aa)) constitute a KH type-2 domain. Residues 221-242 (GASPRRRASRRPQQFEDRSNEG) are disordered. A compositionally biased stretch (basic and acidic residues) spans 233–242 (QQFEDRSNEG).

Belongs to the universal ribosomal protein uS3 family. In terms of assembly, part of the 30S ribosomal subunit. Forms a tight complex with proteins S10 and S14.

Functionally, binds the lower part of the 30S subunit head. Binds mRNA in the 70S ribosome, positioning it for translation. This Parasynechococcus marenigrum (strain WH8102) protein is Small ribosomal subunit protein uS3.